A 426-amino-acid polypeptide reads, in one-letter code: Glutamate-1-semialdehyde 2,1-aminomutase (426 aa).

K265 carries the post-translational modification N6-(pyridoxal phosphate)lysine.

The protein belongs to the class-III pyridoxal-phosphate-dependent aminotransferase family. HemL subfamily. In terms of assembly, homodimer. The cofactor is pyridoxal 5'-phosphate.

The protein localises to the cytoplasm. The enzyme catalyses (S)-4-amino-5-oxopentanoate = 5-aminolevulinate. It functions in the pathway porphyrin-containing compound metabolism; protoporphyrin-IX biosynthesis; 5-aminolevulinate from L-glutamyl-tRNA(Glu): step 2/2. This chain is Glutamate-1-semialdehyde 2,1-aminomutase, found in Cronobacter sakazakii (strain ATCC BAA-894) (Enterobacter sakazakii).